The primary structure comprises 169 residues: Disulfide bond formation protein B (169 aa).

The Cytoplasmic segment spans residues 1 to 13 (MQALNHFSRIRLS). A helical transmembrane segment spans residues 14–30 (WFLLLLCIIFFEASALT). Over 31-48 (FQHIMKLPPCVMCIYERV) the chain is Periplasmic. Cysteine 40 and cysteine 43 are disulfide-bonded. A helical transmembrane segment spans residues 49-64 (AMMGIGGAAIIGLLNP). Topologically, residues 65 to 71 (NNLIIRW) are cytoplasmic. Residues 72 to 89 (CGFIAWGISAGWGLKLAL) traverse the membrane as a helical segment. Residues 90–144 (EHVDFQLNPSPFSTCDLFVTFPSWAPLNKWAPWMFEAYGDCSKIVWQFLTLTMPQ) lie on the Periplasmic side of the membrane. Cysteine 104 and cysteine 130 form a disulfide bridge. Residues 145 to 163 (WLVIIFAGNLIALAIFVIA) traverse the membrane as a helical segment. Residues 164 to 169 (QFFNKK) are Cytoplasmic-facing.

The protein belongs to the DsbB family.

Its subcellular location is the cell inner membrane. Its function is as follows. Required for disulfide bond formation in some periplasmic proteins. Acts by oxidizing the DsbA protein. In Aliivibrio fischeri (strain ATCC 700601 / ES114) (Vibrio fischeri), this protein is Disulfide bond formation protein B.